We begin with the raw amino-acid sequence, 82 residues long: Photosystem I iron-sulfur center (82 aa).

4Fe-4S ferredoxin-type domains follow at residues 2–31 (SHTV…MVPW) and 37–68 (GQIA…VRVY). Residues C11, C14, C17, C21, C48, C51, C54, and C58 each contribute to the [4Fe-4S] cluster site.

As to quaternary structure, the eukaryotic PSI reaction center is composed of at least 11 subunits. [4Fe-4S] cluster serves as cofactor.

The protein localises to the plastid. It localises to the chloroplast thylakoid membrane. The enzyme catalyses reduced [plastocyanin] + hnu + oxidized [2Fe-2S]-[ferredoxin] = oxidized [plastocyanin] + reduced [2Fe-2S]-[ferredoxin]. In terms of biological role, apoprotein for the two 4Fe-4S centers FA and FB of photosystem I (PSI); essential for photochemical activity. FB is the terminal electron acceptor of PSI, donating electrons to ferredoxin. The C-terminus interacts with PsaA/B/D and helps assemble the protein into the PSI complex. Required for binding of PsaD and PsaE to PSI. PSI is a plastocyanin/cytochrome c6-ferredoxin oxidoreductase, converting photonic excitation into a charge separation, which transfers an electron from the donor P700 chlorophyll pair to the spectroscopically characterized acceptors A0, A1, FX, FA and FB in turn. This is Photosystem I iron-sulfur center from Trieres chinensis (Marine centric diatom).